The following is a 635-amino-acid chain: Chaperone protein HtpG (635 aa).

Residues 1–343 (MTAEATVETR…SNDLSLNVSR (343 aa)) form an a; substrate-binding region. Positions 344-560 (EILQQDPNID…EHDMGAQMRR (217 aa)) are b. Residues 561-635 (LLEAAGQAVP…LNKLLLELSN (75 aa)) form a c region.

It belongs to the heat shock protein 90 family. In terms of assembly, homodimer.

The protein localises to the cytoplasm. In terms of biological role, molecular chaperone. Has ATPase activity. The sequence is that of Chaperone protein HtpG from Saccharophagus degradans (strain 2-40 / ATCC 43961 / DSM 17024).